The sequence spans 211 residues: Transcriptional regulatory protein RcsA (211 aa).

An HTH luxR-type domain is found at 135–200 (SEVHPFTLSQ…VIYHVVRLTD (66 aa)). A DNA-binding region (H-T-H motif) is located at residues 159 to 178 (TIQISDKMQIKAKTVSSHKG).

The protein belongs to the RcsA family.

Component of the Rcs signaling system, which controls transcription of numerous genes. Binds to DNA to regulate expression of genes. This chain is Transcriptional regulatory protein RcsA, found in Erwinia amylovora (Fire blight bacteria).